The primary structure comprises 144 residues: Transcription antitermination protein NusB (144 aa).

It belongs to the NusB family.

Functionally, involved in transcription antitermination. Required for transcription of ribosomal RNA (rRNA) genes. Binds specifically to the boxA antiterminator sequence of the ribosomal RNA (rrn) operons. This chain is Transcription antitermination protein NusB, found in Haemophilus influenzae (strain 86-028NP).